We begin with the raw amino-acid sequence, 86 residues long: Dynein light chain 1, cytoplasmic (86 aa).

The protein belongs to the dynein light chain family. Homodimer. Cytoplasmic dynein consists of two catalytic heavy chains (HCs) and a number of non-catalytic subunits which present intermediate chains (ICs), light intermediate chains (LICs) and light chains (LCs). Component of the nuclear pore complex (NPC). NPC constitutes the exclusive means of nucleocytoplasmic transport. NPCs allow the passive diffusion of ions and small molecules and the active, nuclear transport receptor-mediated bidirectional transport of macromolecules such as proteins, RNAs, ribonucleoparticles (RNPs), and ribosomal subunits across the nuclear envelope. Due to its 8-fold rotational symmetry, all subunits are present with 8 copies or multiples thereof.

The protein resides in the cytoplasm. Its subcellular location is the cytoskeleton. It is found in the nucleus. It localises to the nuclear pore complex. In terms of biological role, acts as one of several non-catalytic accessory components of the cytoplasmic dynein complex that are thought to be involved in linking dynein to cargos and to adapter proteins that regulate dynein function. Cytoplasmic dynein 1 acts as a motor for the intracellular retrograde motility of vesicles and organelles along microtubules. May play a role in changing or maintaining the spatial distribution of cytoskeletal structures. Also a component of the nuclear pore complex. This is Dynein light chain 1, cytoplasmic (DYN2) from Candida glabrata (strain ATCC 2001 / BCRC 20586 / JCM 3761 / NBRC 0622 / NRRL Y-65 / CBS 138) (Yeast).